A 747-amino-acid polypeptide reads, in one-letter code: Small G protein signaling modulator 3 (747 aa).

In terms of domain architecture, Rab-GAP TBC spans Gly111–Gly302. The residue at position 403 (Ser403) is a Phosphoserine. A coiled-coil region spans residues Glu412 to Ala435. The region spanning Gly477–Glu536 is the SH3 domain. In terms of domain architecture, RUN spans Gly552 to Glu715.

It belongs to the small G protein signaling modulator family. In terms of assembly, interacts with GJA1. Interaction with GJA1 induces its degradation. Interacts via its RUN domain with the C-terminal region of NF2. Interacts with RAB3A, RAB4A, RAB5A, RAB8A, RAB11A, RAP1A, RAP1B, RAP2A, RAP2B and PDCD6I. No interaction with RAB27A.

It is found in the cytoplasm. May play a cooperative role in NF2-mediated growth suppression of cells. This chain is Small G protein signaling modulator 3, found in Bos taurus (Bovine).